Reading from the N-terminus, the 330-residue chain is D-cysteine desulfhydrase (330 aa).

K52 carries the post-translational modification N6-(pyridoxal phosphate)lysine.

This sequence belongs to the ACC deaminase/D-cysteine desulfhydrase family. In terms of assembly, homodimer. Requires pyridoxal 5'-phosphate as cofactor.

It catalyses the reaction D-cysteine + H2O = hydrogen sulfide + pyruvate + NH4(+) + H(+). Catalyzes the alpha,beta-elimination reaction of D-cysteine and of several D-cysteine derivatives. It could be a defense mechanism against D-cysteine. The polypeptide is D-cysteine desulfhydrase (Yersinia pestis).